A 119-amino-acid polypeptide reads, in one-letter code: Hemerythrin subunit A (119 aa).

The Fe cation site is built by His-26, His-55, Glu-59, His-74, His-78, His-107, and Asp-112.

Belongs to the hemerythrin family.

Hemerythrin is a respiratory protein in blood cells of certain marine worms. The oxygen-binding site in each chain contains two iron atoms. The protein is Hemerythrin subunit A of Sipunculus nudus (Sipunculan worm).